The primary structure comprises 134 residues: Profilin-4 (134 aa).

Cys13 and Cys118 are disulfide-bonded. The short motif at 84 to 100 is the Involved in PIP2 interaction element; sequence AVIRGKKGSGGITIKKT. Residue Thr114 is modified to Phosphothreonine.

It belongs to the profilin family. In terms of assembly, occurs in many kinds of cells as a complex with monomeric actin in a 1:1 ratio. In terms of processing, phosphorylated by MAP kinases.

The protein localises to the cytoplasm. It localises to the cytoskeleton. Binds to actin and affects the structure of the cytoskeleton. At high concentrations, profilin prevents the polymerization of actin, whereas it enhances it at low concentrations. This Olea europaea (Common olive) protein is Profilin-4.